The following is a 514-amino-acid chain: 3-octaprenyl-4-hydroxybenzoate carboxy-lyase (514 aa).

N177 provides a ligand contact to Mn(2+). Prenylated FMN contacts are provided by residues 180 to 182, 194 to 196, and 199 to 200; these read IYR, RWL, and RG. Position 243 (E243) interacts with Mn(2+). The Proton donor role is filled by D314.

This sequence belongs to the UbiD family. Homohexamer. The cofactor is prenylated FMN. Mn(2+) is required as a cofactor.

The protein resides in the cell membrane. The catalysed reaction is a 4-hydroxy-3-(all-trans-polyprenyl)benzoate + H(+) = a 2-(all-trans-polyprenyl)phenol + CO2. Its pathway is cofactor biosynthesis; ubiquinone biosynthesis. Catalyzes the decarboxylation of 3-octaprenyl-4-hydroxy benzoate to 2-octaprenylphenol, an intermediate step in ubiquinone biosynthesis. The polypeptide is 3-octaprenyl-4-hydroxybenzoate carboxy-lyase (Bordetella petrii (strain ATCC BAA-461 / DSM 12804 / CCUG 43448)).